Here is a 191-residue protein sequence, read N- to C-terminus: Large ribosomal subunit protein bL9 (191 aa).

A disordered region spans residues 150-191 (EAERQAKGESLTSADAIYGVDEDALRPEDFFDPDADRDGDDE). Residues 179-191 (FFDPDADRDGDDE) show a composition bias toward acidic residues.

Belongs to the bacterial ribosomal protein bL9 family.

In terms of biological role, binds to the 23S rRNA. The polypeptide is Large ribosomal subunit protein bL9 (Allorhizobium ampelinum (strain ATCC BAA-846 / DSM 112012 / S4) (Agrobacterium vitis (strain S4))).